The primary structure comprises 248 residues: 4-hydroxy-tetrahydrodipicolinate reductase (248 aa).

NAD(+) is bound by residues 74-76 (GTT) and 99-102 (SANF). The Proton donor/acceptor role is filled by His134. His135 lines the (S)-2,3,4,5-tetrahydrodipicolinate pocket. The active-site Proton donor is Lys138. Residue 144-145 (GT) participates in (S)-2,3,4,5-tetrahydrodipicolinate binding.

The protein belongs to the DapB family.

The protein localises to the cytoplasm. It carries out the reaction (S)-2,3,4,5-tetrahydrodipicolinate + NAD(+) + H2O = (2S,4S)-4-hydroxy-2,3,4,5-tetrahydrodipicolinate + NADH + H(+). It catalyses the reaction (S)-2,3,4,5-tetrahydrodipicolinate + NADP(+) + H2O = (2S,4S)-4-hydroxy-2,3,4,5-tetrahydrodipicolinate + NADPH + H(+). It participates in amino-acid biosynthesis; L-lysine biosynthesis via DAP pathway; (S)-tetrahydrodipicolinate from L-aspartate: step 4/4. Its function is as follows. Catalyzes the conversion of 4-hydroxy-tetrahydrodipicolinate (HTPA) to tetrahydrodipicolinate. The polypeptide is 4-hydroxy-tetrahydrodipicolinate reductase (Chlorobium phaeobacteroides (strain BS1)).